A 55-amino-acid chain; its full sequence is Preprotein translocase subunit SecG (55 aa).

At 1-31 the chain is on the cytoplasmic side; sequence MPKNNTNENFQSGAGLIRYFNEEEIKGPALD. Residues 32–51 traverse the membrane as a helical segment; that stretch reads PKLIIYIGIAMAVIVELAKI. The Extracellular segment spans residues 52 to 55; the sequence is FWPV.

Belongs to the SEC61-beta family. Component of the protein translocase complex. Heterotrimer consisting of alpha (SecY), beta (SecG) and gamma (SecE) subunits. Can form oligomers of the heterotrimer.

Its subcellular location is the cell membrane. Its function is as follows. Involved in protein export. The function of the beta subunit is unknown, but it may be involved in stabilization of the trimeric complex. This is Preprotein translocase subunit SecG from Picrophilus torridus (strain ATCC 700027 / DSM 9790 / JCM 10055 / NBRC 100828 / KAW 2/3).